The following is a 474-amino-acid chain: ATP synthase subunit beta (474 aa).

153–160 (GGAGVGKT) contributes to the ATP binding site.

It belongs to the ATPase alpha/beta chains family. As to quaternary structure, F-type ATPases have 2 components, CF(1) - the catalytic core - and CF(0) - the membrane proton channel. CF(1) has five subunits: alpha(3), beta(3), gamma(1), delta(1), epsilon(1). CF(0) has three main subunits: a(1), b(2) and c(9-12). The alpha and beta chains form an alternating ring which encloses part of the gamma chain. CF(1) is attached to CF(0) by a central stalk formed by the gamma and epsilon chains, while a peripheral stalk is formed by the delta and b chains.

It localises to the cell inner membrane. It catalyses the reaction ATP + H2O + 4 H(+)(in) = ADP + phosphate + 5 H(+)(out). Produces ATP from ADP in the presence of a proton gradient across the membrane. The catalytic sites are hosted primarily by the beta subunits. This is ATP synthase subunit beta from Rickettsia prowazekii (strain Madrid E).